A 718-amino-acid polypeptide reads, in one-letter code: MADLEEGFALTAVPLGSGPDGPLGVEQSGKTDQFLVTDSGRTVILYKVSDQKPLGSWSVKQGQIITCPAVCNFQTGEYIVVHDNKVLRIWNNEDVNLDKVFKATLSAEVYRIHSIQGTEPLVLFKEGAVRGLEALLAEPQQKIETVISDEEVIKWTKFFMVFRHPVLIFITEKHGNYFVYVQKFNSRILSKYTLLLGQEEKCVIQSFSTSVGRKFISLMSLSSDGCVYETLIPIHPSEPEKNQRLVQSQLLKSVVSGSARNGVALAILDQDHIAVLGAPLPASKECLSVWNTKFQTLQTSKELPQGTSGQLWYYGENLFMLHGKFLTVVPFKCEVSSLAGALGKLKHSQDPGIHATPHFVNWETSQGCGLGSQNSEQSKRILRRRKVEVSVQPEVPASTQLLATIQKDSEKHIEVELRKFLATKRTPDFHTIIGDVIIGLLGRCKAEPSFYPCNCLMQLVQTHVLSYSLCPGLMEFALEKTDVQILQLCLQQFPDIPESVTCACLKVFLSIGDDTLQDTDINMESVSDYMDPVQDGEMEEQTAFLQNGFSPEEDNCDSCAQKLKEKPQAAADESTSCPVTPKRAALLNAVLHSAYSETFLLPHLKDIPAQHSTLFLQYLYFLYLKCSENATMTLPGTHPPTLSQIMDWICLLLDANFTVVVMIPEAKRLLLSLYKFVKSQISICSELNKIEVSFRELQKLNQEKNNRELYSIEVLELF.

Position 346 is an N6-methyllysine (Lys346).

In terms of assembly, interacts with UTP4. Interacts with FBL/fibrillarin in a transcription-dependent manner. May associate with the proposed t-UTP subcomplex of the SSU processome containing at least UTP4, WDR43, HEATR1, UTP15, WDR75.

The protein localises to the nucleus. The protein resides in the nucleolus. Ribosome biogenesis factor. May be required for both optimal rDNA transcription and small subunit (SSU) pre-rRNA processing at sites A', A0, 1 and 2b. The chain is Nucleolar protein 11 (NOL11) from Bos taurus (Bovine).